The primary structure comprises 565 residues: CTP synthase (565 aa).

The interval 1–272 (MARPKNVKHI…DLRVMKKLGL (272 aa)) is amidoligase domain. S18 lines the CTP pocket. S18 contributes to the UTP binding site. Residue 19-24 (SLGKGI) participates in ATP binding. Position 59 (Y59) interacts with L-glutamine. D76 is an ATP binding site. Residues D76 and E146 each contribute to the Mg(2+) site. CTP contacts are provided by residues 153–155 (DIE), 193–198 (KTKPTQ), and K229. Residues 193–198 (KTKPTQ) and K229 each bind UTP. In terms of domain architecture, Glutamine amidotransferase type-1 spans 299 to 543 (TIGVCGKYTE…VQAAKEFAMG (245 aa)). Residue G363 participates in L-glutamine binding. The Nucleophile; for glutamine hydrolysis role is filled by C390. L-glutamine contacts are provided by residues 391 to 394 (LGMQ), E414, and R471. Catalysis depends on residues H516 and E518.

It belongs to the CTP synthase family. In terms of assembly, homotetramer.

It catalyses the reaction UTP + L-glutamine + ATP + H2O = CTP + L-glutamate + ADP + phosphate + 2 H(+). It carries out the reaction L-glutamine + H2O = L-glutamate + NH4(+). The enzyme catalyses UTP + NH4(+) + ATP = CTP + ADP + phosphate + 2 H(+). It participates in pyrimidine metabolism; CTP biosynthesis via de novo pathway; CTP from UDP: step 2/2. Its activity is regulated as follows. Allosterically activated by GTP, when glutamine is the substrate; GTP has no effect on the reaction when ammonia is the substrate. The allosteric effector GTP functions by stabilizing the protein conformation that binds the tetrahedral intermediate(s) formed during glutamine hydrolysis. Inhibited by the product CTP, via allosteric rather than competitive inhibition. Catalyzes the ATP-dependent amination of UTP to CTP with either L-glutamine or ammonia as the source of nitrogen. Regulates intracellular CTP levels through interactions with the four ribonucleotide triphosphates. The protein is CTP synthase of Chlorobaculum parvum (strain DSM 263 / NCIMB 8327) (Chlorobium vibrioforme subsp. thiosulfatophilum).